The following is a 298-amino-acid chain: MALDKDIVGSIEFLEVVGLQGSTYLLKGPNDESVKLNQSEVADEDDFEIGEEYSFFVYPNRSGDLFATQNMPDITKDKYDFAKVIKTDRDGVHIDVGLPREVLVPWEDLPKLKELWPQAGDYLLVTLRIDSTNQMFGRLASETIVESMFTPVNDDSKQNEYISARAYRLLRVGSFLLSNEGYKIFVHESERKHEPRLGEEVEVRIIGHNEKGELNGSFLPLAHERLDDDGQVIFDLLVEYDGELPFWDKSSPDAIKEVFNMSKGSFKRAIGHLYKKKIINIETGKITLTKKGWSRVDD.

The protein belongs to the CvfB family.

In Staphylococcus epidermidis (strain ATCC 35984 / DSM 28319 / BCRC 17069 / CCUG 31568 / BM 3577 / RP62A), this protein is Conserved virulence factor B (cvfB).